We begin with the raw amino-acid sequence, 168 residues long: MPLLDSFKVDHTRMYAPAVRVAKTMTTPKGDTITVFDLRFCVPNKEILPEKGIHTLEHLFAGFMRDHLNGNGVEIIDISPMGCRTGFYMSLIGTPSEQQVADTWLASMQDVLTVQDQSKIPELNEYQCGTYLMHSLAEAQQIAQNVLARKVAVNKNEELTLDEGLLNA.

Residues His54, His58, and Cys128 each coordinate Fe cation.

Belongs to the LuxS family. As to quaternary structure, homodimer. Fe cation serves as cofactor.

It catalyses the reaction S-(5-deoxy-D-ribos-5-yl)-L-homocysteine = (S)-4,5-dihydroxypentane-2,3-dione + L-homocysteine. Involved in the synthesis of autoinducer 2 (AI-2) which is secreted by bacteria and is used to communicate both the cell density and the metabolic potential of the environment. The regulation of gene expression in response to changes in cell density is called quorum sensing. Catalyzes the transformation of S-ribosylhomocysteine (RHC) to homocysteine (HC) and 4,5-dihydroxy-2,3-pentadione (DPD). The sequence is that of S-ribosylhomocysteine lyase from Neisseria meningitidis serogroup C (strain 053442).